The primary structure comprises 398 residues: T-box transcription factor TBX1 (398 aa).

The tract at residues A23 to F72 is disordered. The segment covering G29–Y38 has biased composition (low complexity). Composition is skewed to pro residues over residues P40–Y50 and A60–A69. Residues L119–D297 constitute a DNA-binding region (T-box).

Binds DNA as a dimer. Interacts with DSCR6. Interacts with NKX2-5.

The protein resides in the nucleus. Functionally, transcription factor that plays a key role in cardiovascular development by promoting pharyngeal arch segmentation during embryonic development. Also involved in craniofacial muscle development. Together with NKX2-5, acts as a regulator of asymmetric cardiac morphogenesis by promoting expression of PITX2. Acts upstream of TBX1 for the formation of the thymus and parathyroid glands from the third pharyngeal pouch. Required for hair follicle stem cell self-renewal. Binds to the palindromic T site 5'-TTCACACCTAGGTGTGAA-3' DNA sequence. In Homo sapiens (Human), this protein is T-box transcription factor TBX1.